The sequence spans 446 residues: N-succinylarginine dihydrolase (446 aa).

Substrate contacts are provided by residues 19-28 (AGLSFGNVAS), N110, and 137-138 (HR). The active site involves E174. R213 is a substrate binding site. H249 is a catalytic residue. Residues D251 and N364 each coordinate substrate. C370 acts as the Nucleophile in catalysis.

It belongs to the succinylarginine dihydrolase family. As to quaternary structure, homodimer.

It catalyses the reaction N(2)-succinyl-L-arginine + 2 H2O + 2 H(+) = N(2)-succinyl-L-ornithine + 2 NH4(+) + CO2. It functions in the pathway amino-acid degradation; L-arginine degradation via AST pathway; L-glutamate and succinate from L-arginine: step 2/5. Catalyzes the hydrolysis of N(2)-succinylarginine into N(2)-succinylornithine, ammonia and CO(2). The protein is N-succinylarginine dihydrolase of Burkholderia lata (strain ATCC 17760 / DSM 23089 / LMG 22485 / NCIMB 9086 / R18194 / 383).